Here is a 410-residue protein sequence, read N- to C-terminus: uncharacterized protein (410 aa).

11 helical membrane-spanning segments follow: residues 14–34, 48–68, 82–102, 140–160, 164–184, 212–232, 251–271, 279–299, 303–323, 342–362, and 371–391; these read IIIG…FLAI, GLVI…GGYI, IFGW…WVFF, YAAI…FGSS, TPFL…ALQF, YLFT…SQFS, LYGL…FPIV, PLCS…IFTV, VPSI…LFSM, GAIG…GICI, and IYIF…LAFA.

Belongs to the major facilitator superfamily. TCR/Tet family.

The protein resides in the cell membrane. This is an uncharacterized protein from Bacillus subtilis (strain 168).